Reading from the N-terminus, the 311-residue chain is Arginine/serine-rich protein 1 (311 aa).

Positions 1–125 (MSTYVNDMWP…RSRSRSRGRS (125 aa)) are disordered. A Phosphoserine modification is found at serine 12. A compositionally biased stretch (low complexity) spans 20-31 (STSRSGGSSRLS). The span at 32 to 123 (SRSRSRSFSR…RSRSRSRSRG (92 aa)) shows a compositional bias: basic residues. Serine 109 and serine 111 each carry phosphoserine. An Omega-N-methylarginine modification is found at arginine 135.

It belongs to the RSRP family. In terms of processing, phosphorylated. Phosphorylation at Ser-109 and Ser-111 mediates the interaction with spliceosome proteins.

It is found in the nucleus. Functionally, probably acts as a spliceosomal factor that contributes to spliceosome assembly and regulates the isoform switching of proteins such as PARP6. The polypeptide is Arginine/serine-rich protein 1 (RSRP1) (Pongo abelii (Sumatran orangutan)).